Reading from the N-terminus, the 94-residue chain is C-C motif chemokine 26 (94 aa).

Positions 1–23 (MMGLSLASAVLLASLLSLHLGTA) are cleaved as a signal peptide. Disulfide bonds link cysteine 33-cysteine 57 and cysteine 34-cysteine 73.

The protein belongs to the intercrine beta (chemokine CC) family. Monomer. In terms of tissue distribution, ubiquitously expressed at low levels in various tissues including heart and ovary.

Its subcellular location is the secreted. Chemoattractant for eosinophils and basophils. Acts as a ligand for C-C chemokine receptor CCR3 which triggers Ca(2+) mobilization in eosinophils. Also acts as a ligand for CX3C chemokine receptor CX3CR1, inducing cell chemotaxis. In Homo sapiens (Human), this protein is C-C motif chemokine 26.